We begin with the raw amino-acid sequence, 1128 residues long: Exportin-6 (1128 aa).

The Importin N-terminal domain occupies 31–97 (IEELLNSFAG…RSCLPKLLLS (67 aa)).

The protein belongs to the exportin family.

Its subcellular location is the nucleus. The protein localises to the cytoplasm. Mediates the nuclear export of actin and profilin-actin complexes in somatic cells. The sequence is that of Exportin-6 (xpo6) from Danio rerio (Zebrafish).